The chain runs to 218 residues: MTQDEMKKAAGWAALKYVEKGSIVGVGTGSTVNHFIDALGTIKDDIKGAVSSSVASTERLKELGIEVFECNDVIKLDVYVDGADEINHAREMIKGGGAALTREKIVAAISEKFVCIVDDTKAVDVLGQFPLPVEVIPMARSYVARELVKLGGDPAYREGVVTDNGNIILDVHNMQITNPKEMEDKINGIAGVVTVGLFAHRGADVVITGTPEGAKIEE.

Substrate-binding positions include Thr28–Thr31, Asp81–Asp84, and Lys94–Gly97. Catalysis depends on Glu103, which acts as the Proton acceptor. A substrate-binding site is contributed by Lys121.

This sequence belongs to the ribose 5-phosphate isomerase family. Homodimer.

It catalyses the reaction aldehydo-D-ribose 5-phosphate = D-ribulose 5-phosphate. It participates in carbohydrate degradation; pentose phosphate pathway; D-ribose 5-phosphate from D-ribulose 5-phosphate (non-oxidative stage): step 1/1. Catalyzes the reversible conversion of ribose-5-phosphate to ribulose 5-phosphate. The chain is Ribose-5-phosphate isomerase A from Vibrio parahaemolyticus serotype O3:K6 (strain RIMD 2210633).